The following is a 264-amino-acid chain: Ribosomal RNA small subunit methyltransferase A (264 aa).

The S-adenosyl-L-methionine site is built by asparagine 15, isoleucine 17, glycine 42, glutamate 64, aspartate 90, and asparagine 109.

It belongs to the class I-like SAM-binding methyltransferase superfamily. rRNA adenine N(6)-methyltransferase family. RsmA subfamily.

The protein localises to the cytoplasm. The enzyme catalyses adenosine(1518)/adenosine(1519) in 16S rRNA + 4 S-adenosyl-L-methionine = N(6)-dimethyladenosine(1518)/N(6)-dimethyladenosine(1519) in 16S rRNA + 4 S-adenosyl-L-homocysteine + 4 H(+). Specifically dimethylates two adjacent adenosines (A1518 and A1519) in the loop of a conserved hairpin near the 3'-end of 16S rRNA in the 30S particle. May play a critical role in biogenesis of 30S subunits. In Wolbachia pipientis subsp. Culex pipiens (strain wPip), this protein is Ribosomal RNA small subunit methyltransferase A.